The primary structure comprises 429 residues: Serum response factor-binding protein 1 (429 aa).

Position 2 is an N-acetylalanine (Ala2). Coiled-coil stretches lie at residues 42-67 and 108-144; these read KGTE…AMKE and LLKK…EDNH. Composition is skewed to polar residues over residues 128 to 138 and 146 to 160; these read QNVTEVESSKN and KNTL…NLQR. 2 disordered regions span residues 128–285 and 311–429; these read QNVT…GDDF and EKVF…TFDD. The span at 183–195 shows a compositional bias: basic and acidic residues; that stretch reads NSKEKIAKMEHGP. Lys190 is covalently cross-linked (Glycyl lysine isopeptide (Lys-Gly) (interchain with G-Cter in SUMO2)). Phosphoserine occurs at positions 203, 205, 264, 279, and 281. Over residues 249–265 the composition is skewed to acidic residues; sequence GGEELCEEEKEYFDDST. The span at 311-341 shows a compositional bias: basic and acidic residues; the sequence is EKVFLKEDTGETHGDTRNDKTKPSTETRKLE. A Glycyl lysine isopeptide (Lys-Gly) (interchain with G-Cter in SUMO2) cross-link involves residue Lys316. A phosphoserine mark is found at Ser349, Ser351, and Ser367. Positions 357–367 are enriched in basic and acidic residues; it reads NFKEQAPKTRS. Residues 373-383 show a composition bias toward polar residues; that stretch reads NEPQFKNQFNK.

As to quaternary structure, interacts with SRF. Forms complexes with SRF and SRF cofactors ARID2, MYOCD and NKX2-5. Interacts with the N-terminus of SLC2A4.

It is found in the cytoplasm. The protein localises to the perinuclear region. Functionally, may be involved in regulating transcriptional activation of cardiac genes during the aging process. May play a role in biosynthesis and/or processing of SLC2A4 in adipose cells. The protein is Serum response factor-binding protein 1 of Pongo abelii (Sumatran orangutan).